Consider the following 189-residue polypeptide: Tumor protein p53-inducible protein 11 (189 aa).

Residues 1 to 63 are Cytoplasmic-facing; sequence MAGKQPPPLM…FAVREPLGLR (63 aa). Ser-14 bears the Phosphoserine mark. A helical membrane pass occupies residues 64–84; sequence VWQFLSAMLFSSVAIMALALP. The Extracellular segment spans residues 85–108; that stretch reads DQLYDAVFDGAEVTSKTPIRLYGG. The chain crosses the membrane as a helical span at residues 109–129; that stretch reads ALLSISLIMWNALYTAEKVII. Position 130 (Arg-130) is a topological domain, cytoplasmic. A helical transmembrane segment spans residues 131–151; the sequence is WTLLTEACYFGVQSLVVTATL. The Extracellular portion of the chain corresponds to 152 to 155; the sequence is AETG. A helical membrane pass occupies residues 156-176; sequence LMSLGTVLLLASRLLFVIVSI. At 177–189 the chain is on the cytoplasmic side; that stretch reads YYYYQVGRKPKKV.

The protein localises to the membrane. The sequence is that of Tumor protein p53-inducible protein 11 (Trp53i11) from Mus musculus (Mouse).